A 258-amino-acid chain; its full sequence is Isoprenyl transferase (258 aa).

Aspartate 24 is an active-site residue. Aspartate 24 provides a ligand contact to Mg(2+). Substrate-binding positions include glycine 25 to arginine 28, tryptophan 29, arginine 37, histidine 41, and serine 69 to glutamate 71. The Proton acceptor role is filled by asparagine 72. Residues tryptophan 73, arginine 75, arginine 190, and arginine 196 to serine 198 each bind substrate. Position 209 (glutamate 209) interacts with Mg(2+).

Belongs to the UPP synthase family. In terms of assembly, homodimer. Mg(2+) serves as cofactor.

In terms of biological role, catalyzes the condensation of isopentenyl diphosphate (IPP) with allylic pyrophosphates generating different type of terpenoids. This chain is Isoprenyl transferase, found in Ralstonia nicotianae (strain ATCC BAA-1114 / GMI1000) (Ralstonia solanacearum).